The chain runs to 419 residues: Tyrosine--tRNA ligase (419 aa).

L-tyrosine is bound at residue Tyr36. The 'HIGH' region signature appears at 41–50 (PTGDSMHIGH). L-tyrosine-binding residues include Tyr168 and Gln172. The 'KMSKS' region motif lies at 230-234 (KFGKT). Lys233 is an ATP binding site. One can recognise an S4 RNA-binding domain in the interval 352-419 (KNIVDFLVDA…KKKYFLARVK (68 aa)).

This sequence belongs to the class-I aminoacyl-tRNA synthetase family. TyrS type 1 subfamily. Homodimer.

The protein localises to the cytoplasm. It carries out the reaction tRNA(Tyr) + L-tyrosine + ATP = L-tyrosyl-tRNA(Tyr) + AMP + diphosphate + H(+). In terms of biological role, catalyzes the attachment of tyrosine to tRNA(Tyr) in a two-step reaction: tyrosine is first activated by ATP to form Tyr-AMP and then transferred to the acceptor end of tRNA(Tyr). This Latilactobacillus sakei subsp. sakei (strain 23K) (Lactobacillus sakei subsp. sakei) protein is Tyrosine--tRNA ligase.